The primary structure comprises 80 residues: Nuclear protein 1 (80 aa).

Disordered regions lie at residues 1 to 21 (MATL…EDED) and 38 to 80 (VGGG…KAWR). Over residues 61–80 (GHERKLLTKFQNSERKKAWR) the composition is skewed to basic and acidic residues. Residues 64–80 (RKLLTKFQNSERKKAWR) carry the Nuclear localization signal motif.

It belongs to the NUPR family. As to quaternary structure, monomer. Directly interacts with MSL1 and binds MORF4L1, two components of histone acetyltransferase complex; the interaction with MORF4L1 may be mediated by MSL1. Interacts with EP300; this interaction enhances the effect of EP300 on PAX2 transcription factor activity. Interacts with PAXIP1; this interaction prevents PAXIP1 inhibition of PAX2 transcription factor activity. Interacts with COPS5; this interaction allows COPS5-dependent CDKN1B nuclear to cytoplasm translocation. Interacts with RNF2. Interacts with FOXO3; this interaction represses FOXO3 transactivation. Interacts with PTMA; regulates apoptotic process. Interacts with MYOD1, EP300 and DDX5; this interaction coordinates the association of anti-proliferative and pro-myogenic proteins at the myogenin promoter. Interacts with TP53; interaction is stress-dependent. Forms a complex with EP300 and TP53; this complex binds CDKN1A promoter leading to transcriptional induction of CDKN1A. Post-translationally, phosphorylated. Phosphorylation promotes DNA-binding activity. In terms of processing, acetylated. Highly expressed in pancreas and both ovaries and testes.

It localises to the nucleus. Its subcellular location is the cytoplasm. It is found in the perinuclear region. Transcription regulator that converts stress signals into a program of gene expression that empowers cells with resistance to the stress induced by a change in their microenvironment. Thereby participates in the regulation of many processes namely cell-cycle, apoptosis, autophagy and DNA repair responses. Controls cell cycle progression and protects cells from genotoxic stress induced by doxorubicin through the complex formation with TP53 and EP300 that binds CDKN1A promoter leading to transcriptional induction of CDKN1A. Protects pancreatic cancer cells from stress-induced cell death by binding the RELB promoter and activating its transcription, leading to IER3 transactivation. Negatively regulates apoptosis through interaction with PTMA. Inhibits autophagy-induced apoptosis in cardiac cells through FOXO3 interaction, inducing cytoplasmic translocation of FOXO3 thereby preventing the FOXO3 association with the pro-autophagic BNIP3 promoter. Inhibits cell growth and facilitates programmed cell death by apoptosis after adriamycin-induced DNA damage through transactivation of TP53. Regulates methamphetamine-induced apoptosis and autophagy through DDIT3-mediated endoplasmic reticulum stress pathway. Participates in DNA repair following gamma-irradiation by facilitating DNA access of the transcription machinery through interaction with MSL1 leading to inhibition of histone H4' Lys-16' acetylation (H4K16ac). Coactivator of PAX2 transcription factor activity, both by recruiting the EP300 cofactor to increase PAX2 transcription factor activity and by binding PAXIP1 to suppress PAXIP1-induced inhibition on PAX2. Positively regulates cell cycle progression through interaction with COPS5 inducing cytoplasmic translocation of CDKN1B leading to the CDKN1B degradation. Coordinates, through its interaction with EP300, the assiociation of MYOD1, EP300 and DDX5 to the MYOG promoter, leading to inhibition of cell-cycle progression and myogenic differentiation promotion. Negatively regulates beta cell proliferation via inhibition of cell-cycle regulatory genes expression through the suppression of their promoter activities. Also required for LHB expression and ovarian maturation. Exacerbates CNS inflammation and demyelination upon cuprizone treatment. The chain is Nuclear protein 1 from Mus musculus (Mouse).